The sequence spans 226 residues: Regulator of microtubule dynamics protein 1 (226 aa).

It belongs to the FAM82/RMD family. Interacts with air-2.

Its subcellular location is the cytoplasm. It is found in the cytoskeleton. It localises to the spindle pole. Functionally, acts in chromosome segregation and organization during mitosis. The polypeptide is Regulator of microtubule dynamics protein 1 (rmd-1) (Caenorhabditis elegans).